The chain runs to 337 residues: Holliday junction branch migration complex subunit RuvB (337 aa).

The large ATPase domain (RuvB-L) stretch occupies residues 1–180 (MTRLISADKS…FGVISRLEFY (180 aa)). ATP contacts are provided by residues Leu-19, Arg-20, Gly-61, Lys-64, Thr-65, Thr-66, 127–129 (EDF), Arg-170, Tyr-180, and Arg-217. Thr-65 is a binding site for Mg(2+). A small ATPAse domain (RuvB-S) region spans residues 181–251 (THEELAFIIT…VADQALALLE (71 aa)). Positions 254–337 (DMGFDMMDRA…APEPPQGKLF (84 aa)) are head domain (RuvB-H). Positions 309 and 314 each coordinate DNA.

This sequence belongs to the RuvB family. Homohexamer. Forms an RuvA(8)-RuvB(12)-Holliday junction (HJ) complex. HJ DNA is sandwiched between 2 RuvA tetramers; dsDNA enters through RuvA and exits via RuvB. An RuvB hexamer assembles on each DNA strand where it exits the tetramer. Each RuvB hexamer is contacted by two RuvA subunits (via domain III) on 2 adjacent RuvB subunits; this complex drives branch migration. In the full resolvosome a probable DNA-RuvA(4)-RuvB(12)-RuvC(2) complex forms which resolves the HJ.

It localises to the cytoplasm. The catalysed reaction is ATP + H2O = ADP + phosphate + H(+). The RuvA-RuvB-RuvC complex processes Holliday junction (HJ) DNA during genetic recombination and DNA repair, while the RuvA-RuvB complex plays an important role in the rescue of blocked DNA replication forks via replication fork reversal (RFR). RuvA specifically binds to HJ cruciform DNA, conferring on it an open structure. The RuvB hexamer acts as an ATP-dependent pump, pulling dsDNA into and through the RuvAB complex. RuvB forms 2 homohexamers on either side of HJ DNA bound by 1 or 2 RuvA tetramers; 4 subunits per hexamer contact DNA at a time. Coordinated motions by a converter formed by DNA-disengaged RuvB subunits stimulates ATP hydrolysis and nucleotide exchange. Immobilization of the converter enables RuvB to convert the ATP-contained energy into a lever motion, pulling 2 nucleotides of DNA out of the RuvA tetramer per ATP hydrolyzed, thus driving DNA branch migration. The RuvB motors rotate together with the DNA substrate, which together with the progressing nucleotide cycle form the mechanistic basis for DNA recombination by continuous HJ branch migration. Branch migration allows RuvC to scan DNA until it finds its consensus sequence, where it cleaves and resolves cruciform DNA. This is Holliday junction branch migration complex subunit RuvB from Citrifermentans bemidjiense (strain ATCC BAA-1014 / DSM 16622 / JCM 12645 / Bem) (Geobacter bemidjiensis).